The primary structure comprises 529 residues: VIN3-like protein 3 (529 aa).

The Nuclear localization signal signature appears at 97 to 104 (PKRQKRDL). The PHD-type zinc finger occupies 137-207 (RCSCCICFKY…CFNCVSCGKT (71 aa)). The Nuclear localization signal signature appears at 214-221 (LKKQLIIA). The Fibronectin type-III domain occupies 312-411 (GSMKIRIESV…FIVSTKTLQD (100 aa)). The segment at 421–529 (MSNCNNANKM…AGVSLILLQD (109 aa)) is VIN3-Interacting Domain (VID).

Interacts with VIN3.

Its subcellular location is the nucleus. Involved in both the vernalization and photoperiod pathways by regulating gene expression. The sequence is that of VIN3-like protein 3 (VIL3) from Arabidopsis thaliana (Mouse-ear cress).